The chain runs to 51 residues: Sperm protamine P1 (51 aa).

It belongs to the protamine P1 family. In terms of assembly, cross-linked by interchain disulfide bonds around the DNA-helix. As to expression, testis.

It localises to the nucleus. The protein resides in the chromosome. Functionally, protamines substitute for histones in the chromatin of sperm during the haploid phase of spermatogenesis. They compact sperm DNA into a highly condensed, stable and inactive complex. This is Sperm protamine P1 (PRM1) from Hylobates lar (Lar gibbon).